Reading from the N-terminus, the 292-residue chain is Tissue factor (292 aa).

A signal peptide spans 1–32 (MAPPTRLQVPRPGTAVPYTVLLGWLLAQVARA). Over 33-250 (ADTTGRAYNL…SREQGRAREM (218 aa)) the chain is Extracellular. Fibronectin type-III domains follow at residues 35–126 (TTGR…PFRN) and 148–240 (QVGT…TECT). N-linked (GlcNAc...) asparagine glycosylation occurs at N41. 2 short sequence motifs (WKS motif) span residues 44 to 46 (WKS) and 75 to 77 (WKS). C79 and C87 are joined by a disulfide. N-linked (GlcNAc...) asparagine glycans are attached at residues N114, N154, N167, and N182. C216 and C239 are disulfide-bonded. The chain crosses the membrane as a helical span at residues 251–271 (FFIIGAVVVVALLIIVLSVTV). At 272–292 (YKCRKARAGPSGKESSPLNIA) the chain is on the cytoplasmic side. C274 carries the S-palmitoyl cysteine lipid modification.

Belongs to the tissue factor family. As to quaternary structure, interacts with HSPE; the interaction, inhibited by heparin, promotes the generation of activated factor X and activates coagulation in the presence of activated factor VII. Brain, heart.

Its subcellular location is the membrane. In terms of biological role, initiates blood coagulation by forming a complex with circulating factor VII or VIIa. The [TF:VIIa] complex activates factors IX or X by specific limited proteolysis. TF plays a role in normal hemostasis by initiating the cell-surface assembly and propagation of the coagulation protease cascade. This is Tissue factor (F3) from Oryctolagus cuniculus (Rabbit).